The following is a 986-amino-acid chain: Bifunctional glutamine synthetase adenylyltransferase/adenylyl-removing enzyme (986 aa).

An adenylyl removase region spans residues 1–482 (MVTTVISNVK…RYGRLFAGEE (482 aa)). The interval 486–986 (SRFGSLVFTG…RAAYEAVVKG (501 aa)) is adenylyl transferase.

The protein belongs to the GlnE family. Requires Mg(2+) as cofactor.

It carries out the reaction [glutamine synthetase]-O(4)-(5'-adenylyl)-L-tyrosine + phosphate = [glutamine synthetase]-L-tyrosine + ADP. It catalyses the reaction [glutamine synthetase]-L-tyrosine + ATP = [glutamine synthetase]-O(4)-(5'-adenylyl)-L-tyrosine + diphosphate. Its function is as follows. Involved in the regulation of glutamine synthetase GlnA, a key enzyme in the process to assimilate ammonia. When cellular nitrogen levels are high, the C-terminal adenylyl transferase (AT) inactivates GlnA by covalent transfer of an adenylyl group from ATP to specific tyrosine residue of GlnA, thus reducing its activity. Conversely, when nitrogen levels are low, the N-terminal adenylyl removase (AR) activates GlnA by removing the adenylyl group by phosphorolysis, increasing its activity. The regulatory region of GlnE binds the signal transduction protein PII (GlnB) which indicates the nitrogen status of the cell. This chain is Bifunctional glutamine synthetase adenylyltransferase/adenylyl-removing enzyme, found in Caulobacter vibrioides (strain ATCC 19089 / CIP 103742 / CB 15) (Caulobacter crescentus).